Reading from the N-terminus, the 499-residue chain is Lysine--tRNA ligase (499 aa).

Positions 407 and 414 each coordinate Mg(2+).

Belongs to the class-II aminoacyl-tRNA synthetase family. As to quaternary structure, homodimer. It depends on Mg(2+) as a cofactor.

The protein resides in the cytoplasm. The enzyme catalyses tRNA(Lys) + L-lysine + ATP = L-lysyl-tRNA(Lys) + AMP + diphosphate. The protein is Lysine--tRNA ligase of Lactiplantibacillus plantarum (strain ATCC BAA-793 / NCIMB 8826 / WCFS1) (Lactobacillus plantarum).